Reading from the N-terminus, the 117-residue chain is uncharacterized protein (117 aa).

2 consecutive transmembrane segments (helical) span residues 43–63 (APIMLVSLAAIVLLIYLLMLL) and 73–93 (AVQHVPMAVFALVCAYPVFIV).

It is found in the cell membrane. This is an uncharacterized protein from Bacillus subtilis (strain 168).